Consider the following 397-residue polypeptide: Dual oxidase maturation factor 1 (397 aa).

The next 2 helical transmembrane spans lie at 26-46 (FVIF…LPGV) and 57-77 (YVLM…PCWA). N-linked (GlcNAc...) asparagine glycosylation occurs at Asn-109. 3 helical membrane passes run 191–211 (AAIW…LFLP), 218–238 (ILAT…LSPC), and 261–281 (CFYL…GLGI). The tract at residues 324-376 (YGTNTTNSSRDKNDISSDKTAGSSGFQSRTSTCQSSASSASLRSQSSIETVHD) is disordered. Residues Asn-327 and Asn-330 are each glycosylated (N-linked (GlcNAc...) asparagine). Over residues 341–350 (DKTAGSSGFQ) the composition is skewed to polar residues. The segment covering 351-370 (SRTSTCQSSASSASLRSQSS) has biased composition (low complexity).

Belongs to the DUOXA family. As to quaternary structure, interacts with bli-3 and tsp-15. Interacts with csnk-1. As to expression, expressed in the hypodermis, specifically in seam cells, the terminal bulb of the pharynx, the distal region of the gonadal arm, vulva, spermatheca and uterus.

It localises to the membrane. Functionally, plays a role in cuticle biogenesis. In complex with tsp-15 and the dual oxidase bli-3, promotes the generation of reactive oxygen species (ROS) and tyrosine cross-linking of collagen, thus stabilizing cuticular extracellular matrix. In Caenorhabditis elegans, this protein is Dual oxidase maturation factor 1.